The primary structure comprises 218 residues: Cell division protein SepF (218 aa).

Residues 24 to 115 (EDVTASTDNV…IANRREQYQQ (92 aa)) are disordered. The segment covering 28-43 (ASTDNVIPRSQQSVRA) has biased composition (polar residues). The span at 47 to 63 (PKQEPRNNHVQQDHQAR) shows a compositional bias: basic and acidic residues.

Belongs to the SepF family. In terms of assembly, homodimer. Interacts with FtsZ.

The protein localises to the cytoplasm. Functionally, cell division protein that is part of the divisome complex and is recruited early to the Z-ring. Probably stimulates Z-ring formation, perhaps through the cross-linking of FtsZ protofilaments. Its function overlaps with FtsA. This is Cell division protein SepF from Streptococcus pyogenes serotype M4 (strain MGAS10750).